The sequence spans 346 residues: Uroporphyrinogen decarboxylase (346 aa).

Residues 26 to 30 (RQAGR), D76, Y153, S208, and H323 each bind substrate.

It belongs to the uroporphyrinogen decarboxylase family. Homodimer.

Its subcellular location is the cytoplasm. The enzyme catalyses uroporphyrinogen III + 4 H(+) = coproporphyrinogen III + 4 CO2. The protein operates within porphyrin-containing compound metabolism; protoporphyrin-IX biosynthesis; coproporphyrinogen-III from 5-aminolevulinate: step 4/4. Catalyzes the decarboxylation of four acetate groups of uroporphyrinogen-III to yield coproporphyrinogen-III. This is Uroporphyrinogen decarboxylase from Prochlorococcus marinus (strain MIT 9215).